A 98-amino-acid polypeptide reads, in one-letter code: Feather keratin 2 (98 aa).

An N-acetylserine modification is found at Ser2.

This sequence belongs to the avian keratin family. In terms of assembly, the avian keratins (F-ker, S-ker, C-ker and B-ker) are a complex mixture of very similar polypeptides.

The polypeptide is Feather keratin 2 (Gallus gallus (Chicken)).